The primary structure comprises 241 residues: Small ribosomal subunit protein uS3 (241 aa).

The region spanning 39 to 107 is the KH type-2 domain; it reads MRKFVMDELK…ETHLNIVEVR (69 aa). Residues 214–241 are disordered; the sequence is ASERRALEGDAQGPASRDRDRDRRRDNA. Residues 229-241 show a composition bias toward basic and acidic residues; the sequence is SRDRDRDRRRDNA.

This sequence belongs to the universal ribosomal protein uS3 family. As to quaternary structure, part of the 30S ribosomal subunit. Forms a tight complex with proteins S10 and S14.

Binds the lower part of the 30S subunit head. Binds mRNA in the 70S ribosome, positioning it for translation. This chain is Small ribosomal subunit protein uS3, found in Rhizobium rhizogenes (strain K84 / ATCC BAA-868) (Agrobacterium radiobacter).